Here is a 332-residue protein sequence, read N- to C-terminus: MTLEIKTSNVEPIRQNYAYIERRFGSKPATRYQEVSFDVQAETNFHYRPLWKPEKTLNDKTHTALQMQDWYAFKDPRQFYYGTYVQHRARLQDTAESNFAFFEKRQLAEHLSNEVKAKVIECLLPFRHVEQTANLHMMSGSAYGYGTVLTQACIYAAMDHLGIAQYISRIGLALDGNSGDSLQQAKQAWMQHPAWQGLRRLCEESLTEQDYFKLFLLQNLVIDGFVTELVYQQFDQWLVSQNARDLAMLTEFMKDTLGDLRKWSDTVIKTAAAESDHNKQLLNEWFTESLAQVKAAFTPWATAALTVDAVDQAEQAVIERAKKLGLQPLTNA.

It belongs to the TmoE/XamoE family.

It carries out the reaction phenol + NADH + O2 + H(+) = catechol + NAD(+) + H2O. It functions in the pathway aromatic compound metabolism; phenol degradation. Its function is as follows. Part of a multicomponent enzyme which catalyzes the degradation of phenol and some of its methylated derivatives. The protein is Phenol 2-monooxygenase, oxygenase component MhpL (mphL) of Acinetobacter pittii (strain PHEA-2).